Consider the following 341-residue polypeptide: Protein BEARSKIN2 (341 aa).

One can recognise an NAC domain in the interval 9–160 (VPPGFRFHPT…GWVVCRVFMK (152 aa)). A DNA-binding region spans residues 109–166 (IGMRKTLVFYKGRAPHGQKTDWIMHEYRLEDADDPQANPSEDGWVVCRVFMKKNLFKV).

In terms of tissue distribution, expressed throughout the root cap, in both columella (COL) and lateral root cap (LRC) cells, with higher levels in the COL-adjoining LRC than the upper LRC. Also present at low levels expression in the tips of cotyledons and the cotyledon vasculature, as weel as in vasculature of the first pair of true leaves and at the hydathodes.

The protein localises to the nucleus. Its function is as follows. Transcription activator. Together with BRN1 and SMB, regulates cellular maturation of root cap. Promotes the expression of genes involved in secondary cell walls (SCW) biosynthesis. The chain is Protein BEARSKIN2 (BRN2) from Arabidopsis thaliana (Mouse-ear cress).